The following is a 93-amino-acid chain: Consomatin G2 (93 aa).

The signal sequence occupies residues 1-18 (MQTAYWVMLMMMVCITAP). The propeptide occupies 19–69 (LPEGGKPNSGIRGLVPNDLTPQHTLRSLISRRQTDVLLDATLLTTPAPEQR). A disulfide bridge links Cys-72 with Cys-77. The residue at position 74 (Trp-74) is a D-tryptophan. Residues 79–93 (WRPYPWRRRDLNGKR) constitute a propeptide that is removed on maturation.

This sequence belongs to the conotoxin C superfamily. Consomatin family. As to expression, expressed by the venom duct.

The protein resides in the secreted. Moderately activates human somatostatin receptors (SSTR) with a preferential activation of SSTR1 and SSTR4. In vivo, does not cause behavioral changes in mice within a few minutes of intracranial injection, but causes a progressive loss of movement thereafter. Four to five hours after injection, mice recover, even with the highest dose tested. Shows antinociception and antihyperalgesia activities in two mouse models of acute pain, most probably by acting outside the central nervous system. The polypeptide is Consomatin G2 (Conus geographus (Geography cone)).